The following is a 268-amino-acid chain: Small ribosomal subunit protein uS2 (268 aa).

The disordered stretch occupies residues 228 to 268 (QLDSEQDYEDFDESISDEYDDYEDEEEYEEQDLEVDASEDE). A compositionally biased stretch (acidic residues) spans 231–268 (SEQDYEDFDESISDEYDDYEDEEEYEEQDLEVDASEDE).

This sequence belongs to the universal ribosomal protein uS2 family.

The polypeptide is Small ribosomal subunit protein uS2 (Rippkaea orientalis (strain PCC 8801 / RF-1) (Cyanothece sp. (strain PCC 8801))).